The primary structure comprises 86 residues: uncharacterized protein (86 aa).

4Fe-4S ferredoxin-type domains lie at 1–29 and 31–65; these read MALL…IGDE and YVID…PDPE. The [4Fe-4S] cluster site is built by C9, C12, C15, C19, C38, C41, C50, and C54.

It depends on [4Fe-4S] cluster as a cofactor.

This is an uncharacterized protein from Haemophilus influenzae (strain ATCC 51907 / DSM 11121 / KW20 / Rd).